Consider the following 230-residue polypeptide: Octanoyltransferase (230 aa).

The BPL/LPL catalytic domain occupies 31–230 (PETPDELWIC…GDKLTRYLAP (200 aa)). Residues 70–77 (RGGQVTYH), 163–165 (ALG), and 176–178 (GVA) each bind substrate. The Acyl-thioester intermediate role is filled by Cys-194.

It belongs to the LipB family.

It localises to the cytoplasm. It carries out the reaction octanoyl-[ACP] + L-lysyl-[protein] = N(6)-octanoyl-L-lysyl-[protein] + holo-[ACP] + H(+). Its pathway is protein modification; protein lipoylation via endogenous pathway; protein N(6)-(lipoyl)lysine from octanoyl-[acyl-carrier-protein]: step 1/2. Functionally, catalyzes the transfer of endogenously produced octanoic acid from octanoyl-acyl-carrier-protein onto the lipoyl domains of lipoate-dependent enzymes. Lipoyl-ACP can also act as a substrate although octanoyl-ACP is likely to be the physiological substrate. This chain is Octanoyltransferase, found in Albidiferax ferrireducens (strain ATCC BAA-621 / DSM 15236 / T118) (Rhodoferax ferrireducens).